The following is a 103-amino-acid chain: Nucleoid-associated protein NIS_0256 (103 aa).

This sequence belongs to the YbaB/EbfC family. Homodimer.

It localises to the cytoplasm. It is found in the nucleoid. Binds to DNA and alters its conformation. May be involved in regulation of gene expression, nucleoid organization and DNA protection. This Nitratiruptor sp. (strain SB155-2) protein is Nucleoid-associated protein NIS_0256.